Reading from the N-terminus, the 325-residue chain is NADH-quinone oxidoreductase subunit H (325 aa).

Helical transmembrane passes span 11–31 (ILLT…CGAF), 81–101 (VIFT…FAIV), 114–134 (IGIL…LFAG), 154–174 (LSYE…AGSF), 186–206 (VWNV…GVAV), 237–257 (FFVG…TLFF), 265–285 (LPPF…FILI), and 304–324 (ICLP…LWQA).

Belongs to the complex I subunit 1 family. NDH-1 is composed of 13 different subunits. Subunits NuoA, H, J, K, L, M, N constitute the membrane sector of the complex.

It is found in the cell inner membrane. It catalyses the reaction a quinone + NADH + 5 H(+)(in) = a quinol + NAD(+) + 4 H(+)(out). Its function is as follows. NDH-1 shuttles electrons from NADH, via FMN and iron-sulfur (Fe-S) centers, to quinones in the respiratory chain. The immediate electron acceptor for the enzyme in this species is believed to be ubiquinone. Couples the redox reaction to proton translocation (for every two electrons transferred, four hydrogen ions are translocated across the cytoplasmic membrane), and thus conserves the redox energy in a proton gradient. This subunit may bind ubiquinone. The polypeptide is NADH-quinone oxidoreductase subunit H (Escherichia coli O7:K1 (strain IAI39 / ExPEC)).